We begin with the raw amino-acid sequence, 327 residues long: Opticin (327 aa).

The N-terminal stretch at 1–19 (MKLPAFLSLLALVLLEAGT) is a signal peptide. 2 positions are modified to sulfotyrosine: Tyr61 and Tyr67. Residues 111–148 (VLGSPNSHGLPTCLICVCLGSSVYCDDADLENIPPLPK) form the LRRNT domain. 7 LRR repeats span residues 149-170 (TTTYLYARFNRIRRIRAGDFKG), 173-194 (KLKRIDLSSNSISSIDDDALRL), 197-218 (ALQDLILPENQLAALPALPPAI), 219-237 (EVLDARHNQLQSSGIQPEA), 243-263 (KLQFLYLADNLLDSIPGPLPP), 264-285 (SLRSLHLQNNLIETMQTDAFCD), and 295-315 (WLEDIRLDGNPINLGLFPSAY). Cys284 and Cys317 are oxidised to a cystine.

This sequence belongs to the small leucine-rich proteoglycan (SLRP) family. SLRP class III subfamily. Homodimer. O-glycosylated. In terms of processing, proteolytically cleaved by MMP1, MMP2, MMP3, MMP7, MMP8, MMP9, ADAMTS4, and ADAMTS5. Proteolytically cleaved by MMP13. Post-translationally, sulfated on tyrosine residues. As to expression, ocular tissues, cartilage, ligament, skin, muscle and testes.

Its subcellular location is the secreted. It is found in the extracellular space. It localises to the extracellular matrix. Its function is as follows. Inhibits angiogenesis in the vitreous humor of the eye, and therefore represses neovascularization. Binds collagen fibrils. May be involved in collagen fiber organization via regulation of other members of the small leucine-rich repeat proteoglycan superfamily. This is Opticin (OPTC) from Canis lupus familiaris (Dog).